A 401-amino-acid chain; its full sequence is Enoyl-[acyl-carrier-protein] reductase [NADH] 1 (401 aa).

NAD(+) is bound by residues 48 to 53, 74 to 75, 111 to 112, and 139 to 140; these read GSSSGY, FE, DA, and LA. Tyr225 serves as a coordination point for substrate. Tyr235 serves as the catalytic Proton donor. NAD(+) contacts are provided by residues Lys244 and 273-275; that span reads VVT.

Belongs to the TER reductase family. In terms of assembly, monomer.

The catalysed reaction is a 2,3-saturated acyl-[ACP] + NAD(+) = a (2E)-enoyl-[ACP] + NADH + H(+). The enzyme catalyses a 2,3-saturated acyl-CoA + NAD(+) = a (2E)-enoyl-CoA + NADH + H(+). It catalyses the reaction (2E)-butenoyl-[ACP] + NADH + H(+) = butanoyl-[ACP] + NAD(+). It carries out the reaction butanoyl-CoA + NAD(+) = (2E)-butenoyl-CoA + NADH + H(+). It functions in the pathway lipid metabolism; fatty acid biosynthesis. Its activity is regulated as follows. Weakly inhibited by triclosan. Functionally, involved in the final reduction of the elongation cycle of fatty acid synthesis (FAS II). Catalyzes the NADH-dependent reduction of a carbon-carbon double bond in an enoyl moiety that is covalently linked to an acyl carrier protein (ACP). It can use both crotonyl-CoA and crotonyl-ACP. The sequence is that of Enoyl-[acyl-carrier-protein] reductase [NADH] 1 from Vibrio cholerae serotype O1 (strain ATCC 39315 / El Tor Inaba N16961).